Reading from the N-terminus, the 348-residue chain is Holliday junction branch migration complex subunit RuvB (348 aa).

Over residues 1-10 (MAIVSSSSGR) the composition is skewed to low complexity. Positions 1–37 (MAIVSSSSGRKPPRRPEALMDPQQAPEEVVSRPEDKL) are disordered. Positions 13–198 (PRRPEALMDP…FGLIQRLEFY (186 aa)) are large ATPase domain (RuvB-L). Positions 37, 38, 79, 82, 83, 84, 188, 198, and 235 each coordinate ATP. Thr83 lines the Mg(2+) pocket. A small ATPAse domain (RuvB-S) region spans residues 199-271 (GQGDLEAIVE…LVGEALSLHR (73 aa)). The segment at 274-348 (HRGLDASDRR…AARSHLAEAA (75 aa)) is head domain (RuvB-H). DNA is bound by residues Arg329 and Arg334.

It belongs to the RuvB family. As to quaternary structure, homohexamer. Forms an RuvA(8)-RuvB(12)-Holliday junction (HJ) complex. HJ DNA is sandwiched between 2 RuvA tetramers; dsDNA enters through RuvA and exits via RuvB. An RuvB hexamer assembles on each DNA strand where it exits the tetramer. Each RuvB hexamer is contacted by two RuvA subunits (via domain III) on 2 adjacent RuvB subunits; this complex drives branch migration. In the full resolvosome a probable DNA-RuvA(4)-RuvB(12)-RuvC(2) complex forms which resolves the HJ.

It localises to the cytoplasm. The enzyme catalyses ATP + H2O = ADP + phosphate + H(+). In terms of biological role, the RuvA-RuvB-RuvC complex processes Holliday junction (HJ) DNA during genetic recombination and DNA repair, while the RuvA-RuvB complex plays an important role in the rescue of blocked DNA replication forks via replication fork reversal (RFR). RuvA specifically binds to HJ cruciform DNA, conferring on it an open structure. The RuvB hexamer acts as an ATP-dependent pump, pulling dsDNA into and through the RuvAB complex. RuvB forms 2 homohexamers on either side of HJ DNA bound by 1 or 2 RuvA tetramers; 4 subunits per hexamer contact DNA at a time. Coordinated motions by a converter formed by DNA-disengaged RuvB subunits stimulates ATP hydrolysis and nucleotide exchange. Immobilization of the converter enables RuvB to convert the ATP-contained energy into a lever motion, pulling 2 nucleotides of DNA out of the RuvA tetramer per ATP hydrolyzed, thus driving DNA branch migration. The RuvB motors rotate together with the DNA substrate, which together with the progressing nucleotide cycle form the mechanistic basis for DNA recombination by continuous HJ branch migration. Branch migration allows RuvC to scan DNA until it finds its consensus sequence, where it cleaves and resolves cruciform DNA. The chain is Holliday junction branch migration complex subunit RuvB from Synechococcus sp. (strain CC9605).